We begin with the raw amino-acid sequence, 168 residues long: ATP synthase subunit b (168 aa).

The helical transmembrane segment at 9-29 threads the bilayer; it reads AIPFGTIAYTLFIFLLLLVML.

The protein belongs to the ATPase B chain family. In terms of assembly, F-type ATPases have 2 components, F(1) - the catalytic core - and F(0) - the membrane proton channel. F(1) has five subunits: alpha(3), beta(3), gamma(1), delta(1), epsilon(1). F(0) has three main subunits: a(1), b(2) and c(10-14). The alpha and beta chains form an alternating ring which encloses part of the gamma chain. F(1) is attached to F(0) by a central stalk formed by the gamma and epsilon chains, while a peripheral stalk is formed by the delta and b chains.

Its subcellular location is the cell membrane. Functionally, f(1)F(0) ATP synthase produces ATP from ADP in the presence of a proton or sodium gradient. F-type ATPases consist of two structural domains, F(1) containing the extramembraneous catalytic core and F(0) containing the membrane proton channel, linked together by a central stalk and a peripheral stalk. During catalysis, ATP synthesis in the catalytic domain of F(1) is coupled via a rotary mechanism of the central stalk subunits to proton translocation. Its function is as follows. Component of the F(0) channel, it forms part of the peripheral stalk, linking F(1) to F(0). This chain is ATP synthase subunit b, found in Bacillus cereus (strain ATCC 10987 / NRS 248).